Here is a 66-residue protein sequence, read N- to C-terminus: Small ribosomal subunit protein bS21 (66 aa).

This sequence belongs to the bacterial ribosomal protein bS21 family.

This chain is Small ribosomal subunit protein bS21, found in Rickettsia akari (strain Hartford).